Consider the following 274-residue polypeptide: MNAHNAALGGTPQRLKRGIPLALRGVARRFGEREVLKDIDLLVPAGQFVAIVGRSGCGKSTLLRLLAGLDQPSRGELLAGSAALAEAREDTRLMFQDSRLLPWKRVIDNVGLGLRGDWRAKARQALRAVGLAERANEWPAALSGGQKQRVALARALIHEPRLLLLDEPLGALDALTRIEMQQLIEGLWREHGFTVLLVTHDVSEAVAVADRVILIEDGEIGLDLPVELPRPRSRGSARLAALEAEVLNRVLAQPELPPQPEPVSPLPTQLRWAL.

Residues 21–242 enclose the ABC transporter domain; sequence LALRGVARRF…SRGSARLAAL (222 aa). An ATP-binding site is contributed by 53–60; that stretch reads GRSGCGKS.

This sequence belongs to the ABC transporter superfamily. Aliphatic sulfonates importer (TC 3.A.1.17.2) family. As to quaternary structure, the complex is composed of two ATP-binding proteins (SsuB), two transmembrane proteins (SsuC) and a solute-binding protein (SsuA).

It localises to the cell inner membrane. It carries out the reaction ATP + H2O + aliphatic sulfonate-[sulfonate-binding protein]Side 1 = ADP + phosphate + aliphatic sulfonateSide 2 + [sulfonate-binding protein]Side 1.. Its function is as follows. Part of the ABC transporter complex SsuABC involved in aliphatic sulfonates import. Responsible for energy coupling to the transport system. This is Aliphatic sulfonates import ATP-binding protein SsuB 2 from Pseudomonas aeruginosa (strain UCBPP-PA14).